A 410-amino-acid chain; its full sequence is 2-oxoglutarate-dependent dioxygenase AOP3 (410 aa).

A Fe2OG dioxygenase domain is found at 258–355 (GNASVGAKEA…RYAAALFSNP (98 aa)). Positions 278, 280, and 335 each coordinate Fe cation. A 2-oxoglutarate-binding site is contributed by R346.

This sequence belongs to the iron/ascorbate-dependent oxidoreductase family. Requires Fe(2+) as cofactor.

Functionally, 2-oxoglutarate-dependent dioxygenase involved in glucosinolates biosynthesis. Catalyzes the conversion of methylsulfinylalkyl glucosinolates to hydroxyalkyl glucosinolates. The polypeptide is 2-oxoglutarate-dependent dioxygenase AOP3 (AOP3) (Arabidopsis thaliana (Mouse-ear cress)).